The following is a 1070-amino-acid chain: Potassium/chloride cotransporter 3 (1070 aa).

The next 15 membrane-spanning stretches (helical) occupy residues 92 to 112 (GVML…TMFI), 114 to 134 (LFWV…AICC), 142 to 162 (ISLS…YFII), 174 to 194 (VGIL…VGGV), 196 to 216 (VILM…LHDT), 228 to 248 (LYGT…VKFV), 251 to 271 (LAPV…GGGI), 400 to 420 (FFML…GTNM), 433 to 453 (VGTI…AILF), 473 to 493 (TMVV…GAFL), 534 to 554 (PFLG…LGAV), 557 to 577 (IAEV…LIAV), 600 to 620 (LLGA…LACI), 791 to 811 (LVLF…LIVT), and 827 to 847 (FIDI…AYLL).

As to expression, expressed in the amphid sheath glia and the cephalic sheath glia. Also expressed in the inner labial and outer labial sheath and socket glia and as well as phasmid sheath glia.

The protein resides in the cell membrane. Functionally, probable potassium/chloride cotransporter that functions in the amphid sheath glial cells to regulate thermotaxis behavior. By maintaining chloride homeostasis, negatively regulates guanylate cyclase gcy-8 in the thermosensory AFD neurons and thereby controls the microvilli receptive ending morphology of the AFD neurons and thermotaxis. Modulates the temperature-evoked neuronal activity of the AFD neurons such as calcium responses to temperature gradients. Might also play a role in the chemotaxis behavior mediated by the sensory neurons AWA and AWC. The chain is Potassium/chloride cotransporter 3 (kcc-3) from Caenorhabditis elegans.